Consider the following 133-residue polypeptide: Large ribosomal subunit protein eL14 (133 aa).

Belongs to the eukaryotic ribosomal protein eL14 family.

The sequence is that of Large ribosomal subunit protein eL14 (RPL14) from Griffithsia japonica (Red alga).